Reading from the N-terminus, the 686-residue chain is ATP-dependent zinc metalloprotease FtsH 1 (686 aa).

Topologically, residues 1 to 33 (MCFCIVSSPEAMHSNADSPSSGPGLQPVWTTLR) are cytoplasmic. The chain crosses the membrane as a helical span at residues 34–54 (SPYVFWIGGAILLALLVHLGI). At 55-164 (KWQQASAPVR…TFAATQESDW (110 aa)) the chain is on the periplasmic side. A helical transmembrane segment spans residues 165–185 (VGTLLLWGLPLGLIVGIWLFF). The Cytoplasmic segment spans residues 186–686 (MRRMATGGRE…AEGASPSSQG (501 aa)). 257–264 (GPPGTGKT) provides a ligand contact to ATP. Residue histidine 479 participates in Zn(2+) binding. Residue glutamate 480 is part of the active site. Histidine 483 and aspartate 555 together coordinate Zn(2+). The tract at residues 661-686 (YAWLKEGDGTSRNSASAEGASPSSQG) is disordered. The segment covering 670–686 (TSRNSASAEGASPSSQG) has biased composition (polar residues).

It in the central section; belongs to the AAA ATPase family. In the C-terminal section; belongs to the peptidase M41 family. In terms of assembly, homohexamer. It depends on Zn(2+) as a cofactor.

The protein resides in the cell inner membrane. Acts as a processive, ATP-dependent zinc metallopeptidase for both cytoplasmic and membrane proteins. Plays a role in the quality control of integral membrane proteins. This Salinibacter ruber (strain M8) protein is ATP-dependent zinc metalloprotease FtsH 1.